Consider the following 254-residue polypeptide: Probable phosphatase Shew185_1467 (254 aa).

H8, H10, H16, H41, E74, H102, H132, D193, and H195 together coordinate Zn(2+).

It belongs to the PHP family. The cofactor is Zn(2+).

The polypeptide is Probable phosphatase Shew185_1467 (Shewanella baltica (strain OS185)).